The primary structure comprises 104 residues: Protein P3 (104 aa).

A helical transmembrane segment spans residues 77 to 99; that stretch reads LVFGVPQKTLLLGFGGLLVLGLV.

Homodimer.

It is found in the virion membrane. The chain is Protein P3 (III) from Pseudoalteromonas phage PM2 (Bacteriophage PM2).